The sequence spans 384 residues: 8-amino-7-oxononanoate synthase (384 aa).

Position 21 (Arg-21) interacts with substrate. Position 108–109 (Gly-108–Phe-109) interacts with pyridoxal 5'-phosphate. His-133 is a binding site for substrate. Positions 179, 207, and 233 each coordinate pyridoxal 5'-phosphate. Lys-236 carries the N6-(pyridoxal phosphate)lysine modification. Residue Thr-352 coordinates substrate.

The protein belongs to the class-II pyridoxal-phosphate-dependent aminotransferase family. BioF subfamily. Homodimer. Pyridoxal 5'-phosphate is required as a cofactor.

It catalyses the reaction 6-carboxyhexanoyl-[ACP] + L-alanine + H(+) = (8S)-8-amino-7-oxononanoate + holo-[ACP] + CO2. It functions in the pathway cofactor biosynthesis; biotin biosynthesis. Catalyzes the decarboxylative condensation of pimeloyl-[acyl-carrier protein] and L-alanine to produce 8-amino-7-oxononanoate (AON), [acyl-carrier protein], and carbon dioxide. The chain is 8-amino-7-oxononanoate synthase from Escherichia coli O8 (strain IAI1).